The following is a 371-amino-acid chain: Carbamoyl phosphate synthase small chain (371 aa).

The tract at residues 1–182 (MGVHKKGYLV…KNPIVHTPKN (182 aa)) is CPSase. The L-glutamine site is built by serine 49, glycine 235, and glycine 237. In terms of domain architecture, Glutamine amidotransferase type-1 spans 186-371 (RVVVLDLGVK…EFVKILEGRK (186 aa)). Cysteine 263 serves as the catalytic Nucleophile. Residues leucine 264, glutamine 267, asparagine 305, glycine 307, and tyrosine 308 each contribute to the L-glutamine site. Residues histidine 346 and glutamate 348 contribute to the active site.

It belongs to the CarA family. As to quaternary structure, composed of two chains; the small (or glutamine) chain promotes the hydrolysis of glutamine to ammonia, which is used by the large (or ammonia) chain to synthesize carbamoyl phosphate. Tetramer of heterodimers (alpha,beta)4.

It catalyses the reaction hydrogencarbonate + L-glutamine + 2 ATP + H2O = carbamoyl phosphate + L-glutamate + 2 ADP + phosphate + 2 H(+). The enzyme catalyses L-glutamine + H2O = L-glutamate + NH4(+). Its pathway is amino-acid biosynthesis; L-arginine biosynthesis; carbamoyl phosphate from bicarbonate: step 1/1. The protein operates within pyrimidine metabolism; UMP biosynthesis via de novo pathway; (S)-dihydroorotate from bicarbonate: step 1/3. Its function is as follows. Small subunit of the glutamine-dependent carbamoyl phosphate synthetase (CPSase). CPSase catalyzes the formation of carbamoyl phosphate from the ammonia moiety of glutamine, carbonate, and phosphate donated by ATP, constituting the first step of 2 biosynthetic pathways, one leading to arginine and/or urea and the other to pyrimidine nucleotides. The small subunit (glutamine amidotransferase) binds and cleaves glutamine to supply the large subunit with the substrate ammonia. In Pyrococcus furiosus (strain ATCC 43587 / DSM 3638 / JCM 8422 / Vc1), this protein is Carbamoyl phosphate synthase small chain.